Here is a 545-residue protein sequence, read N- to C-terminus: Membrane protein insertase YidC (545 aa).

Helical transmembrane passes span 10–30 (AVYL…FLFS), 319–339 (LLYF…NVIP), 341–361 (WGLS…PLTF), 407–427 (IGGC…YGLV), 467–487 (ILPF…SNVS), and 502–522 (MPIM…IYWI).

Belongs to the OXA1/ALB3/YidC family. Type 1 subfamily. As to quaternary structure, interacts with the Sec translocase complex via SecD. Specifically interacts with transmembrane segments of nascent integral membrane proteins during membrane integration.

It localises to the cell inner membrane. Functionally, required for the insertion and/or proper folding and/or complex formation of integral membrane proteins into the membrane. Involved in integration of membrane proteins that insert both dependently and independently of the Sec translocase complex, as well as at least some lipoproteins. Aids folding of multispanning membrane proteins. The protein is Membrane protein insertase YidC of Borrelia duttonii (strain Ly).